The sequence spans 543 residues: EH domain-containing protein 2 (543 aa).

Ser3 carries the phosphoserine modification. Residues 55-286 (FDGKPMVLVA…DLFRDIQGLP (232 aa)) form the Dynamin-type G domain. The segment at 65 to 72 (GQYSTGKT) is G1 motif. Residue 65-72 (GQYSTGKT) participates in ATP binding. Positions 91–92 (EP) are G2 motif. Positions 120–122 (KPF) match the KPF loop; caveolar targeting motif. The segment at 153-156 (DTPG) is G3 motif. The interval 219-222 (NKAD) is G4 motif. Position 220 (Lys220) interacts with ATP. Residue Val243 is a region of interest, G5 motif. Trp258 lines the ATP pocket. The interval 320–340 (SVFGKENKKKQLILKLPVIFA) is mediates membrane-binding. 5 positions are modified to phosphoserine: Ser438, Ser468, Ser470, Ser484, and Ser493. One can recognise an EH domain in the interval 449–537 (DKSKYDEIFY…RRLVPPSKRR (89 aa)). Residues 481-516 (LPNSVLGRIWKLSDVDRDGMLDDEEFALASHLIEAK) enclose the EF-hand domain. Residues Asp494, Asp496, Asp498, Met500, and Glu505 each contribute to the Ca(2+) site. The tract at residues 523–543 (PANLPRRLVPPSKRRHKGSAE) is disordered. Residues 534 to 543 (SKRRHKGSAE) show a composition bias toward basic residues.

The protein belongs to the TRAFAC class dynamin-like GTPase superfamily. Dynamin/Fzo/YdjA family. EHD subfamily. In terms of assembly, homodimer and homooligomer. Interacts with EHD1. May also interact with EHD3 and EHD4. Interacts with MYOF. Interacts with EHBP1. Interacts with FER1L5 (via second C2 domain). Interacts with CAV1 in a cholesterol-dependent manner. Interacts (via EH domain) with PACSIN2 (via NPF motifs); this interaction probably stabilizes the caveolae. Highly expressed in heart and moderately expressed in placenta, lung, and skeletal muscle.

Its subcellular location is the cell membrane. It localises to the membrane. The protein resides in the caveola. The protein localises to the endosome membrane. It is found in the cytoplasm. Its subcellular location is the cytosol. With respect to regulation, the very low intrinsic ATPase activity is increased upon interaction with liposomes. ATP- and membrane-binding protein that controls membrane reorganization/tubulation upon ATP hydrolysis. Plays a role in membrane trafficking between the plasma membrane and endosomes. Important for the internalization of GLUT4. Required for fusion of myoblasts to skeletal muscle myotubes. Required for normal translocation of FER1L5 to the plasma membrane. Regulates the equilibrium between cell surface-associated and cell surface-dissociated caveolae by constraining caveolae at the cell membrane. The chain is EH domain-containing protein 2 from Homo sapiens (Human).